A 134-amino-acid polypeptide reads, in one-letter code: ATP synthase epsilon chain (134 aa).

Belongs to the ATPase epsilon chain family. As to quaternary structure, F-type ATPases have 2 components, CF(1) - the catalytic core - and CF(0) - the membrane proton channel. CF(1) has five subunits: alpha(3), beta(3), gamma(1), delta(1), epsilon(1). CF(0) has three main subunits: a, b and c.

It localises to the cell inner membrane. Its function is as follows. Produces ATP from ADP in the presence of a proton gradient across the membrane. This Solibacter usitatus (strain Ellin6076) protein is ATP synthase epsilon chain.